The primary structure comprises 308 residues: Acetaldehyde dehydrogenase (308 aa).

Residue 25–28 (TGAI) coordinates NAD(+). Cys-139 serves as the catalytic Acyl-thioester intermediate. Asn-279 lines the NAD(+) pocket.

The protein belongs to the acetaldehyde dehydrogenase family.

The enzyme catalyses acetaldehyde + NAD(+) + CoA = acetyl-CoA + NADH + H(+). The sequence is that of Acetaldehyde dehydrogenase from Streptomyces griseus subsp. griseus (strain JCM 4626 / CBS 651.72 / NBRC 13350 / KCC S-0626 / ISP 5235).